A 458-amino-acid polypeptide reads, in one-letter code: Cysteine--tRNA ligase (458 aa).

Cys29 serves as a coordination point for Zn(2+). Residues 31-41 carry the 'HIGH' region motif; the sequence is MTVYDLCHLGH. 3 residues coordinate Zn(2+): Cys213, His238, and Glu242. Positions 270–274 match the 'KMSKS' region motif; that stretch reads KMSKS. Residue Lys273 participates in ATP binding.

It belongs to the class-I aminoacyl-tRNA synthetase family. In terms of assembly, monomer. Requires Zn(2+) as cofactor.

The protein localises to the cytoplasm. The catalysed reaction is tRNA(Cys) + L-cysteine + ATP = L-cysteinyl-tRNA(Cys) + AMP + diphosphate. This is Cysteine--tRNA ligase from Acidovorax sp. (strain JS42).